The chain runs to 151 residues: Large ribosomal subunit protein uL13 (151 aa).

Residues 126–151 (YPGSNHPHEAQKPEKLTIQTIPGGER) form a disordered region. A compositionally biased stretch (basic and acidic residues) spans 131 to 140 (HPHEAQKPEK).

This sequence belongs to the universal ribosomal protein uL13 family. Part of the 50S ribosomal subunit.

This protein is one of the early assembly proteins of the 50S ribosomal subunit, although it is not seen to bind rRNA by itself. It is important during the early stages of 50S assembly. The protein is Large ribosomal subunit protein uL13 of Trichodesmium erythraeum (strain IMS101).